The following is a 181-amino-acid chain: MKSIAVTGYKNFELGIFKKDADEAVYIKETIKRHLLPLVEDGLEWVIISGQLGIELWAGDVVAELKADYPIKLAILEPFEKQSANWNEANQLWASEVLEKADYHAFITKRPYESPAQFAARDGFIIDNTDGALLVYDLEKEGSPKFFYDRAIQAKEQSNYYIDCIDFYALQEVVEDMNQTF.

Belongs to the UPF0398 family.

The protein is UPF0398 protein LMOf2365_1918 of Listeria monocytogenes serotype 4b (strain F2365).